A 154-amino-acid chain; its full sequence is MAKMSVVAAALLALLVLGQATAFRTTVTTTLEEEQEENPRGRSEQQCREQMERQQQLNHCRMYLRQQMEESPYQNPRPLRRGEEPHLDECCEQLERMDEMCRCEGLRMMLRRQREEMELQGEQMQRIMRKAENLLSRCNLSPQRCPMGGYTAWL.

The first 22 residues, 1-22 (MAKMSVVAAALLALLVLGQATA), serve as a signal peptide directing secretion. Residues 29 to 52 (TTLEEEQEENPRGRSEQQCREQME) are disordered. Over residues 37-52 (ENPRGRSEQQCREQME) the composition is skewed to basic and acidic residues. Cystine bridges form between Cys-47-Cys-101, Cys-60-Cys-90, Cys-91-Cys-138, and Cys-103-Cys-145. The propeptide occupies 72 to 76 (PYQNP). A propeptide spanning residues 151–154 (TAWL) is cleaved from the precursor.

The protein belongs to the 2S seed storage albumins family. In terms of assembly, the mature protein consists of a small and a large chain linked by disulfide bonds.

Its function is as follows. This is a 2S seed storage protein. This chain is 2S sulfur-rich seed storage protein 2 (BE2S2), found in Bertholletia excelsa (Brazil nut).